Consider the following 146-residue polypeptide: Ferric uptake regulation protein 2 (146 aa).

The Zn(2+) site is built by cysteine 96 and cysteine 99.

Belongs to the Fur family.

It is found in the cytoplasm. Functionally, acts as a global negative controlling element, employing Fe(2+) as a cofactor to bind the operator of the repressed genes. The protein is Ferric uptake regulation protein 2 (fur2) of Mycolicibacterium fortuitum (Mycobacterium fortuitum).